The primary structure comprises 78 residues: Acyl carrier protein (78 aa).

The Carrier domain occupies 2 to 77; that stretch reads SDTEERVKKI…DAVKFIDKAS (76 aa). Position 37 is an O-(pantetheine 4'-phosphoryl)serine (Ser-37).

It belongs to the acyl carrier protein (ACP) family. In terms of processing, 4'-phosphopantetheine is transferred from CoA to a specific serine of apo-ACP by AcpS. This modification is essential for activity because fatty acids are bound in thioester linkage to the sulfhydryl of the prosthetic group.

The protein localises to the cytoplasm. It functions in the pathway lipid metabolism; fatty acid biosynthesis. Functionally, carrier of the growing fatty acid chain in fatty acid biosynthesis. This Bartonella bacilliformis (strain ATCC 35685 / KC583 / Herrer 020/F12,63) protein is Acyl carrier protein.